The chain runs to 440 residues: Argininosuccinate lyase (440 aa).

This sequence belongs to the lyase 1 family. Argininosuccinate lyase subfamily.

It localises to the cytoplasm. It catalyses the reaction 2-(N(omega)-L-arginino)succinate = fumarate + L-arginine. It participates in amino-acid biosynthesis; L-arginine biosynthesis; L-arginine from L-ornithine and carbamoyl phosphate: step 3/3. The protein is Argininosuccinate lyase of Clostridium botulinum (strain Langeland / NCTC 10281 / Type F).